The sequence spans 316 residues: Calumenin-B (316 aa).

The signal sequence occupies residues 1–19 (MELRPLVMCFALCVVYASS). EF-hand domains follow at residues 69–104 (ESKERLGMLVERIDEDKDGYVSVEEMKKWIKHSQKR), 105–140 (WIYDDVDRQWKGHDHNGDGLVSWEEYKNATYGYILD), 152–187 (QMISRDERRFKMSDLDADLKANKEEFTAFLHPEEYD), 189–224 (MKDIVVLETMEDIDKNGDGFIDLEEYIGDMYNQEGD), 230–265 (WVRTEREQFTEFRDTNKDGRMDKEETKDWILPSDYD), and 266–301 (HAEAEAKHLVYESDNDKDGKLTKAEIVEKYDLFVGS). Ca(2+) contacts are provided by Asp-82, Asp-84, Asp-86, Tyr-88, Glu-93, Asp-118, Asn-120, Asp-122, and Glu-129. The N-linked (GlcNAc...) asparagine glycan is linked to Asn-132. Ca(2+)-binding residues include Asp-165, Asp-167, Asp-169, Lys-171, Glu-176, Asp-202, Asn-204, Asp-206, Glu-213, Asp-243, Asn-245, Asp-247, Arg-249, Glu-254, Asp-279, Asp-281, Asp-283, Lys-285, and Glu-290. The Prevents secretion from ER motif lies at 313–316 (HDEF).

It belongs to the CREC family. Interacts with ggcx.

Its subcellular location is the endoplasmic reticulum membrane. The protein resides in the golgi apparatus. It localises to the secreted. The protein localises to the melanosome. It is found in the sarcoplasmic reticulum lumen. Involved in regulation of vitamin K-dependent carboxylation of multiple N-terminal glutamate residues. Seems to inhibit gamma-carboxylase ggcx. Binds 7 calcium ions with a low affinity. This Salmo salar (Atlantic salmon) protein is Calumenin-B (calub).